We begin with the raw amino-acid sequence, 457 residues long: Cell division cycle 20.1, cofactor of APC complex (457 aa).

WD repeat units lie at residues 138–175 (VDDFYLNLLDWGSANVLAIALDHTVYLWDASTGSTSEL), 180–219 (EEKGPVTSINWAPDGRHVAVGLNNSEVQLWDSASNRQLRT), 223–260 (GHQSRVGSLAWNNHILTTGGMDGLIINNDVRIRSPIVE), 264–303 (GHTQEVCGLKWSGSGQQLASGGNDNVVHIWDRSVASSNST), 312–354 (EHTS…CLNS), 356–397 (DTGS…KMAE), and 400–439 (GHTSRVLYMAQSPDGCTVASAAGDETLRFWNVFGVPETAK).

This sequence belongs to the WD repeat CDC20/Fizzy family. As to quaternary structure, the APC/C is composed of at least 11 subunits that stay tightly associated throughout the cell cycle. Interacts with APC10, FZR1, FZR2, FZR3. Binds to GIG1 and PYM. Part of the mitotic checkpoint complex (MCC); interacts with MAD2, BUB3.1, BUBR1 and BUB1. Binds to cyclins CYCA1-2, CYCB2-1 and CYCB2-2. Interacts with PANS1. As to expression, expressed in meristems and organ primordia. Present in flowers, leaves, stems, roots, pollen grains and developing seeds.

Its subcellular location is the nucleus. The protein operates within protein modification; protein ubiquitination. Component of the anaphase promoting complex/cyclosome (APC/C), a cell cycle-regulated E3 ubiquitin-protein ligase complex that controls progression through mitosis and the G1 phase of the cell cycle. The polypeptide is Cell division cycle 20.1, cofactor of APC complex (CDC20-1) (Arabidopsis thaliana (Mouse-ear cress)).